A 302-amino-acid polypeptide reads, in one-letter code: 4-hydroxy-tetrahydrodipicolinate synthase (302 aa).

A pyruvate-binding site is contributed by T55. The active-site Proton donor/acceptor is the Y144. K172 acts as the Schiff-base intermediate with substrate in catalysis. Pyruvate is bound at residue V214.

Belongs to the DapA family. As to quaternary structure, homotetramer; dimer of dimers.

It is found in the cytoplasm. The enzyme catalyses L-aspartate 4-semialdehyde + pyruvate = (2S,4S)-4-hydroxy-2,3,4,5-tetrahydrodipicolinate + H2O + H(+). It functions in the pathway amino-acid biosynthesis; L-lysine biosynthesis via DAP pathway; (S)-tetrahydrodipicolinate from L-aspartate: step 3/4. Catalyzes the condensation of (S)-aspartate-beta-semialdehyde [(S)-ASA] and pyruvate to 4-hydroxy-tetrahydrodipicolinate (HTPA). In Synechococcus sp. (strain CC9902), this protein is 4-hydroxy-tetrahydrodipicolinate synthase.